The following is a 592-amino-acid chain: Monocopper oxidase-like protein SKS2 (592 aa).

The signal sequence occupies residues 1 to 23 (MAATDFFFAFVFSFALIFGFSFA). Asn-61, Asn-110, Asn-172, Asn-203, Asn-259, Asn-280, Asn-295, Asn-344, Asn-364, Asn-433, and Asn-447 each carry an N-linked (GlcNAc...) asparagine glycan. His-455 provides a ligand contact to Cu cation. Asn-476 and Asn-536 each carry an N-linked (GlcNAc...) asparagine glycan. A lipid anchor (GPI-anchor amidated serine) is attached at Ser-564. A propeptide spans 565–592 (ATKSMTNGQLILIFSMMMVLLSSFSSFC) (removed in mature form).

This sequence belongs to the multicopper oxidase family. It depends on Cu cation as a cofactor.

Its subcellular location is the cell membrane. The polypeptide is Monocopper oxidase-like protein SKS2 (SKS2) (Arabidopsis thaliana (Mouse-ear cress)).